Here is a 742-residue protein sequence, read N- to C-terminus: Synaptic vesicle glycoprotein 2A (742 aa).

The segment at 1 to 57 (MEEGFRDRAAFIRGAKDIAKEVKKHATKKVVKGLDRVQDEYSRRSYSRFEEEDDDDD) is interaction with SYT1. Over 1-169 (MEEGFRDRAA…GHGRFQWTLY (169 aa)) the chain is Cytoplasmic. The segment covering 32-49 (KGLDRVQDEYSRRSYSRF) has biased composition (basic and acidic residues). A disordered region spans residues 32-144 (KGLDRVQDEY…GRGEAQRRKE (113 aa)). Phosphoserine is present on residues S80 and S81. T84 carries the post-translational modification Phosphothreonine. Positions 122–137 (VRGGLGDGEGPPGGRG) are enriched in gly residues. A helical membrane pass occupies residues 170-190 (FVLGLALMADGVEVFVVGFVL). Over 191–205 (PSAEKDMCLSDSNKG) the chain is Extracellular. A helical membrane pass occupies residues 206–226 (MLGLIVYLGMMVGAFLWGGLA). The Cytoplasmic segment spans residues 227–233 (DRLGRRQ). Residues 234 to 254 (CLLISLSVNSVFAFFSSFVQG) form a helical membrane-spanning segment. At 255–262 (YGTFLFCR) the chain is on the extracellular side. Residues 263–283 (LLSGVGIGGSIPIVFSYFSEF) form a helical membrane-spanning segment. Over 284-294 (LAQEKRGEHLS) the chain is Cytoplasmic. The chain crosses the membrane as a helical span at residues 295 to 315 (WLCMFWMIGGVYAAAMAWAII). Residues 316–334 (PHYGWSFQMGSAYQFHSWR) lie on the Extracellular side of the membrane. Residues 335-355 (VFVLVCAFPSVFAIGALTTQP) traverse the membrane as a helical segment. Residues 356–447 (ESPRFFLENG…CFGPEYRRIT (92 aa)) lie on the Cytoplasmic side of the membrane. Phosphoserine is present on S393. Residues 448 to 468 (LMMMGVWFTMSFSYYGLTVWF) traverse the membrane as a helical segment. The Extracellular segment spans residues 469-598 (PDMIRHLQAV…GTGEGAYMVY (130 aa)). The residue at position 480 (Y480) is a Phosphotyrosine. N-linked (GlcNAc...) asparagine glycans are attached at residues N498, N548, and N573. Residues 599–619 (FVSFLGTLAVLPGNIVSALLM) traverse the membrane as a helical segment. Topologically, residues 620–626 (DKIGRLR) are cytoplasmic. The helical transmembrane segment at 627–647 (MLAGSSVMSCVSCFFLSFGNS) threads the bilayer. At 648–651 (ESAM) the chain is on the extracellular side. Residues 652 to 672 (IALLCLFGGVSIASWNALDVL) traverse the membrane as a helical segment. The Cytoplasmic segment spans residues 673 to 685 (TVELYPSDKRTTA). The chain crosses the membrane as a helical span at residues 686 to 708 (FGFLNALCKLAAVLGISIFTSFV). Topologically, residues 709–712 (GITK) are extracellular. The chain crosses the membrane as a helical span at residues 713–731 (AAPILFASAALALGSSLAL). At 732 to 742 (KLPETRGQVLQ) the chain is on the cytoplasmic side.

This sequence belongs to the major facilitator superfamily. As to quaternary structure, interacts with SYT1/synaptotagmin-1 in a calcium-dependent manner. Binds the adapter protein complex AP-2. Phosphorylation by CK1 of the N-terminal cytoplasmic domain regulates interaction with SYT1. Post-translationally, N-glycosylated.

It is found in the presynapse. Its subcellular location is the cytoplasmic vesicle. The protein localises to the secretory vesicle. It localises to the synaptic vesicle membrane. Functionally, plays a role in the control of regulated secretion in neural and endocrine cells, enhancing selectively low-frequency neurotransmission. Positively regulates vesicle fusion by maintaining the readily releasable pool of secretory vesicles. This is Synaptic vesicle glycoprotein 2A (SV2A) from Bos taurus (Bovine).